The primary structure comprises 1162 residues: PAN2-PAN3 deadenylation complex catalytic subunit PAN2 (1162 aa).

WD repeat units lie at residues 27 to 66 (AKEKSATKMAFDQDVNLIWVGDTYGRVSSYDPSYSLYTRH), 153 to 193 (NTVQ…VVKT), 196 to 233 (GHSCMVSSMDFRDHTLVTAGKSKRFNMMYPDQFVNVYD), and 300 to 339 (HPCQSVTQLQLSPSGDYIAFIEHDNNINMWSRSNGMTGFT). The segment at 341-491 (TATTILEYPD…LMNYKPSNDR (151 aa)) is linker. The interval 401–443 (VPLPPKSSAASSSHTALSTSSDSRPNTARSGNPSSGGQKYRLL) is disordered. The span at 407–423 (SSAASSSHTALSTSSDS) shows a compositional bias: low complexity. Positions 424–437 (RPNTARSGNPSSGG) are enriched in polar residues. The 413-residue stretch at 492–904 (EVPPAFTKLQ…TPEIAIYSDA (413 aa)) folds into the USP domain. In terms of domain architecture, Exonuclease spans 956–1126 (VALDAEFVAL…IEDAYTALVL (171 aa)). A divalent metal cation-binding residues include Asp959, Glu961, Asp1068, and Asp1119.

The protein belongs to the peptidase C19 family. PAN2 subfamily. In terms of assembly, forms a heterotrimer with an asymmetric homodimer of the regulatory subunit PAN3 to form the poly(A)-nuclease (PAN) deadenylation complex. The cofactor is a divalent metal cation.

The protein resides in the cytoplasm. It carries out the reaction Exonucleolytic cleavage of poly(A) to 5'-AMP.. Its activity is regulated as follows. Positively regulated by the regulatory subunit PAN3. In terms of biological role, catalytic subunit of the poly(A)-nuclease (PAN) deadenylation complex, one of two cytoplasmic mRNA deadenylases involved in mRNA turnover. PAN specifically shortens poly(A) tails of RNA and the activity is stimulated by poly(A)-binding protein PAB1. PAN deadenylation is followed by rapid degradation of the shortened mRNA tails by the CCR4-NOT complex. Deadenylated mRNAs are then degraded by two alternative mechanisms, namely exosome-mediated 3'-5' exonucleolytic degradation, or deadenylation-dependent mRNA decaping and subsequent 5'-3' exonucleolytic degradation by XRN1. May also be involved in post-transcriptional maturation of mRNA poly(A) tails. The protein is PAN2-PAN3 deadenylation complex catalytic subunit PAN2 of Eremothecium gossypii (strain ATCC 10895 / CBS 109.51 / FGSC 9923 / NRRL Y-1056) (Yeast).